The chain runs to 269 residues: Formamidopyrimidine-DNA glycosylase (269 aa).

Pro2 serves as the catalytic Schiff-base intermediate with DNA. Glu3 serves as the catalytic Proton donor. The active-site Proton donor; for beta-elimination activity is the Lys57. DNA contacts are provided by His90, Arg109, and Lys150. Residues 235–269 form an FPG-type zinc finger; it reads RVYGRNGEPCRTCGTPIETAKHGQRSTFFCRRCQK. Arg259 acts as the Proton donor; for delta-elimination activity in catalysis.

Belongs to the FPG family. Monomer. The cofactor is Zn(2+).

It carries out the reaction Hydrolysis of DNA containing ring-opened 7-methylguanine residues, releasing 2,6-diamino-4-hydroxy-5-(N-methyl)formamidopyrimidine.. The catalysed reaction is 2'-deoxyribonucleotide-(2'-deoxyribose 5'-phosphate)-2'-deoxyribonucleotide-DNA = a 3'-end 2'-deoxyribonucleotide-(2,3-dehydro-2,3-deoxyribose 5'-phosphate)-DNA + a 5'-end 5'-phospho-2'-deoxyribonucleoside-DNA + H(+). In terms of biological role, involved in base excision repair of DNA damaged by oxidation or by mutagenic agents. Acts as a DNA glycosylase that recognizes and removes damaged bases. Has a preference for oxidized purines, such as 7,8-dihydro-8-oxoguanine (8-oxoG). Has AP (apurinic/apyrimidinic) lyase activity and introduces nicks in the DNA strand. Cleaves the DNA backbone by beta-delta elimination to generate a single-strand break at the site of the removed base with both 3'- and 5'-phosphates. The sequence is that of Formamidopyrimidine-DNA glycosylase from Pectobacterium carotovorum subsp. carotovorum (strain PC1).